The primary structure comprises 356 residues: Putative methylthioribose-1-phosphate isomerase (356 aa).

Substrate is bound by residues 57–59, Arg-100, and Gln-206; that span reads RGA. Asp-247 (proton donor) is an active-site residue. 257 to 258 contributes to the substrate binding site; it reads NK.

It belongs to the eIF-2B alpha/beta/delta subunits family. MtnA subfamily.

It catalyses the reaction 5-(methylsulfanyl)-alpha-D-ribose 1-phosphate = 5-(methylsulfanyl)-D-ribulose 1-phosphate. Functionally, catalyzes the interconversion of methylthioribose-1-phosphate (MTR-1-P) into methylthioribulose-1-phosphate (MTRu-1-P). In Pyrococcus furiosus (strain ATCC 43587 / DSM 3638 / JCM 8422 / Vc1), this protein is Putative methylthioribose-1-phosphate isomerase.